Reading from the N-terminus, the 433-residue chain is Serine hydroxymethyltransferase (433 aa).

121–123 lines the (6S)-5,6,7,8-tetrahydrofolate pocket; sequence AHV. Lysine 227 is modified (N6-(pyridoxal phosphate)lysine). Residue glutamate 243 participates in (6S)-5,6,7,8-tetrahydrofolate binding.

It belongs to the SHMT family. As to quaternary structure, homodimer. The cofactor is pyridoxal 5'-phosphate.

The protein resides in the cytoplasm. It functions in the pathway amino-acid biosynthesis; glycine biosynthesis; glycine from L-serine: step 1/1. Functionally, catalyzes the reversible interconversion of serine and glycine with a modified folate serving as the one-carbon carrier. Also exhibits a pteridine-independent aldolase activity toward beta-hydroxyamino acids, producing glycine and aldehydes, via a retro-aldol mechanism. The chain is Serine hydroxymethyltransferase from Saccharolobus islandicus (strain L.S.2.15 / Lassen #1) (Sulfolobus islandicus).